We begin with the raw amino-acid sequence, 297 residues long: UDP-N-acetylenolpyruvoylglucosamine reductase (297 aa).

Residues 26 to 191 (QTGGPAEYLA…IAATFALKAG (166 aa)) enclose the FAD-binding PCMH-type domain. The active site involves R170. The Proton donor role is filled by S220. E290 is an active-site residue.

It belongs to the MurB family. FAD serves as cofactor.

It localises to the cytoplasm. It catalyses the reaction UDP-N-acetyl-alpha-D-muramate + NADP(+) = UDP-N-acetyl-3-O-(1-carboxyvinyl)-alpha-D-glucosamine + NADPH + H(+). Its pathway is cell wall biogenesis; peptidoglycan biosynthesis. In terms of biological role, cell wall formation. This chain is UDP-N-acetylenolpyruvoylglucosamine reductase, found in Lactobacillus delbrueckii subsp. bulgaricus (strain ATCC 11842 / DSM 20081 / BCRC 10696 / JCM 1002 / NBRC 13953 / NCIMB 11778 / NCTC 12712 / WDCM 00102 / Lb 14).